A 527-amino-acid polypeptide reads, in one-letter code: Bifunctional purine biosynthesis protein PurH (527 aa).

The MGS-like domain maps to 1 to 149 (MTADLLPVRR…KNFARVAVAT (149 aa)).

It belongs to the PurH family.

It carries out the reaction (6R)-10-formyltetrahydrofolate + 5-amino-1-(5-phospho-beta-D-ribosyl)imidazole-4-carboxamide = 5-formamido-1-(5-phospho-D-ribosyl)imidazole-4-carboxamide + (6S)-5,6,7,8-tetrahydrofolate. The catalysed reaction is IMP + H2O = 5-formamido-1-(5-phospho-D-ribosyl)imidazole-4-carboxamide. The protein operates within purine metabolism; IMP biosynthesis via de novo pathway; 5-formamido-1-(5-phospho-D-ribosyl)imidazole-4-carboxamide from 5-amino-1-(5-phospho-D-ribosyl)imidazole-4-carboxamide (10-formyl THF route): step 1/1. It participates in purine metabolism; IMP biosynthesis via de novo pathway; IMP from 5-formamido-1-(5-phospho-D-ribosyl)imidazole-4-carboxamide: step 1/1. This Stenotrophomonas maltophilia (strain K279a) protein is Bifunctional purine biosynthesis protein PurH.